We begin with the raw amino-acid sequence, 332 residues long: Endonuclease 8-like 2 (332 aa).

The active-site Schiff-base intermediate with DNA is Pro2. The active-site Proton donor is the Glu3. Residue Lys50 is the Proton donor; for beta-elimination activity of the active site. Lys50 carries the N6-acetyllysine modification. Residues 56-121 (FDPDEEMGPP…EDDSEYLERD (66 aa)) are disordered. A Phosphoserine modification is found at Ser68. The segment covering 74–84 (PQKEAQKEGAA) has biased composition (basic and acidic residues). A compositionally biased stretch (polar residues) spans 94-105 (GQKTPDGSSQSA). The residue at position 154 (Lys154) is an N6-acetyllysine. Asn231 contacts DNA. The segment at 284–320 (QVYQREQCPAGHQVMKEAFGPQDGLQRLTWWCPQCQP) adopts an FPG-type zinc-finger fold. The active-site Proton donor; for delta-elimination activity is the Arg310.

It belongs to the FPG family. As to quaternary structure, binds EP300.

The protein localises to the nucleus. It carries out the reaction 2'-deoxyribonucleotide-(2'-deoxyribose 5'-phosphate)-2'-deoxyribonucleotide-DNA = a 3'-end 2'-deoxyribonucleotide-(2,3-dehydro-2,3-deoxyribose 5'-phosphate)-DNA + a 5'-end 5'-phospho-2'-deoxyribonucleoside-DNA + H(+). Its activity is regulated as follows. Acetylation of Lys-50 leads to loss of DNA nicking activity. Involved in base excision repair of DNA damaged by oxidation or by mutagenic agents. Has DNA glycosylase activity towards 5-hydroxyuracil and other oxidized derivatives of cytosine with a preference for mismatched double-stranded DNA (DNA bubbles). Has low or no DNA glycosylase activity towards thymine glycol, 2-hydroxyadenine, hypoxanthine and 8-oxoguanine. Has AP (apurinic/apyrimidinic) lyase activity and introduces nicks in the DNA strand. Cleaves the DNA backbone by beta-delta elimination to generate a single-strand break at the site of the removed base with both 3'- and 5'-phosphates. The chain is Endonuclease 8-like 2 (NEIL2) from Pongo abelii (Sumatran orangutan).